Here is a 239-residue protein sequence, read N- to C-terminus: Purine nucleoside phosphorylase DeoD-type (239 aa).

H5 serves as a coordination point for a purine D-ribonucleoside. Phosphate is bound by residues G21, R25, R44, and 88–91 (RVGS). A purine D-ribonucleoside-binding positions include 180–182 (EME) and 204–205 (SD). Catalysis depends on D205, which acts as the Proton donor.

This sequence belongs to the PNP/UDP phosphorylase family. In terms of assembly, homohexamer; trimer of homodimers.

It carries out the reaction a purine D-ribonucleoside + phosphate = a purine nucleobase + alpha-D-ribose 1-phosphate. The enzyme catalyses a purine 2'-deoxy-D-ribonucleoside + phosphate = a purine nucleobase + 2-deoxy-alpha-D-ribose 1-phosphate. Functionally, catalyzes the reversible phosphorolytic breakdown of the N-glycosidic bond in the beta-(deoxy)ribonucleoside molecules, with the formation of the corresponding free purine bases and pentose-1-phosphate. The polypeptide is Purine nucleoside phosphorylase DeoD-type (Pectobacterium atrosepticum (strain SCRI 1043 / ATCC BAA-672) (Erwinia carotovora subsp. atroseptica)).